The sequence spans 330 residues: Tetraacyldisaccharide 4'-kinase (330 aa).

58–65 serves as a coordination point for ATP; the sequence is TVGGSGKT.

Belongs to the LpxK family.

It carries out the reaction a lipid A disaccharide + ATP = a lipid IVA + ADP + H(+). It participates in glycolipid biosynthesis; lipid IV(A) biosynthesis; lipid IV(A) from (3R)-3-hydroxytetradecanoyl-[acyl-carrier-protein] and UDP-N-acetyl-alpha-D-glucosamine: step 6/6. Its function is as follows. Transfers the gamma-phosphate of ATP to the 4'-position of a tetraacyldisaccharide 1-phosphate intermediate (termed DS-1-P) to form tetraacyldisaccharide 1,4'-bis-phosphate (lipid IVA). This chain is Tetraacyldisaccharide 4'-kinase, found in Shewanella pealeana (strain ATCC 700345 / ANG-SQ1).